The primary structure comprises 437 residues: Diaminopimelate decarboxylase (437 aa).

N6-(pyridoxal phosphate)lysine is present on Lys-81. Residues Gly-256 and 298–301 (EPGR) each bind pyridoxal 5'-phosphate. 3 residues coordinate substrate: Arg-301, Arg-337, and Tyr-341. Catalysis depends on Cys-366, which acts as the Proton donor. Glu-367 and Tyr-396 together coordinate substrate. Residue Tyr-396 participates in pyridoxal 5'-phosphate binding.

Belongs to the Orn/Lys/Arg decarboxylase class-II family. LysA subfamily. Homodimer. Pyridoxal 5'-phosphate is required as a cofactor.

The enzyme catalyses meso-2,6-diaminopimelate + H(+) = L-lysine + CO2. It participates in amino-acid biosynthesis; L-lysine biosynthesis via DAP pathway; L-lysine from DL-2,6-diaminopimelate: step 1/1. Specifically catalyzes the decarboxylation of meso-diaminopimelate (meso-DAP) to L-lysine. In Actinosynnema pretiosum subsp. auranticum, this protein is Diaminopimelate decarboxylase.